Reading from the N-terminus, the 357-residue chain is GTPase Obg (357 aa).

The Obg domain occupies Met1–Ile158. In terms of domain architecture, OBG-type G spans Ala159–Glu345. GTP is bound by residues Gly165–Ser172, Phe190–Thr194, Asp212–Gly215, Thr280–Asp283, and Ser326–Val328. Mg(2+) contacts are provided by Ser172 and Thr192.

Belongs to the TRAFAC class OBG-HflX-like GTPase superfamily. OBG GTPase family. In terms of assembly, monomer. It depends on Mg(2+) as a cofactor.

Its subcellular location is the cytoplasm. In terms of biological role, an essential GTPase which binds GTP, GDP and possibly (p)ppGpp with moderate affinity, with high nucleotide exchange rates and a fairly low GTP hydrolysis rate. Plays a role in control of the cell cycle, stress response, ribosome biogenesis and in those bacteria that undergo differentiation, in morphogenesis control. This chain is GTPase Obg, found in Nautilia profundicola (strain ATCC BAA-1463 / DSM 18972 / AmH).